The chain runs to 1189 residues: Pyruvate carboxylase (1189 aa).

A Biotin carboxylation domain is found at 21–473 (TMNKILVANR…WTTFIDDTPE (453 aa)). ATP-binding residues include Lys-139, Glu-223, and His-258. The region spanning 143-340 (RNLAYAANVP…IVAAQIQIAA (198 aa)) is the ATP-grasp domain. Residue Arg-315 is part of the active site. In terms of domain architecture, Pyruvate carboxyltransferase spans 559 to 826 (LMIMDTTWRD…ETGIPEANAR (268 aa)). Residues 567–571 (RDAHQ) and Arg-640 each bind substrate. Asp-568 is an a divalent metal cation binding site. The a divalent metal cation site is built by Lys-736, His-766, and His-768. Residue Lys-736 is modified to N6-carboxylysine. A substrate-binding site is contributed by Thr-900. A Biotinyl-binding domain is found at 1099 to 1174 (KADAHNPNEI…DASDLIPKSS (76 aa)). Lys-1140 carries the N6-biotinyllysine modification.

Requires biotin as cofactor. Zn(2+) is required as a cofactor.

The protein localises to the cytoplasm. It catalyses the reaction hydrogencarbonate + pyruvate + ATP = oxaloacetate + ADP + phosphate + H(+). It participates in carbohydrate biosynthesis; gluconeogenesis. In terms of biological role, pyruvate carboxylase catalyzes a 2-step reaction, involving the ATP-dependent carboxylation of the covalently attached biotin in the first step and the transfer of the carboxyl group to pyruvate in the second. This Komagataella pastoris (Yeast) protein is Pyruvate carboxylase (PYC1).